The chain runs to 372 residues: Heat-inducible transcription repressor HrcA (372 aa).

The disordered stretch occupies residues 300-334 (YGRSGAAGEPAGNDPVGEPETESETESQTNDTEPI).

Belongs to the HrcA family.

Negative regulator of class I heat shock genes (grpE-dnaK-dnaJ and groELS operons). Prevents heat-shock induction of these operons. This Bifidobacterium longum (strain NCC 2705) protein is Heat-inducible transcription repressor HrcA.